The primary structure comprises 365 residues: Outer membrane protein assembly factor BamC (365 aa).

An N-terminal signal peptide occupies residues 1-16; the sequence is MLKKVTPLFLVAAVAA. A lipid anchor (N-palmitoyl cysteine) is attached at cysteine 17. Cysteine 17 is lipidated: S-diacylglycerol cysteine.

Belongs to the BamC family. Part of the Bam complex.

It localises to the cell outer membrane. Functionally, part of the outer membrane protein assembly complex, which is involved in assembly and insertion of beta-barrel proteins into the outer membrane. This is Outer membrane protein assembly factor BamC from Shewanella oneidensis (strain ATCC 700550 / JCM 31522 / CIP 106686 / LMG 19005 / NCIMB 14063 / MR-1).